Consider the following 153-residue polypeptide: Ribosome maturation factor RimP (153 aa).

It belongs to the RimP family.

The protein localises to the cytoplasm. Required for maturation of 30S ribosomal subunits. This is Ribosome maturation factor RimP from Coxiella burnetii (strain CbuG_Q212) (Coxiella burnetii (strain Q212)).